Reading from the N-terminus, the 129-residue chain is Serum amyloid A protein (129 aa).

The signal sequence occupies residues methionine 1 to serine 18. Glutamine 19 is subject to Pyrrolidone carboxylic acid. Positions phenylalanine 88–tyrosine 129 are disordered. Residues arginine 112–tyrosine 129 constitute a propeptide, often cleaved during amyloidogenesis.

It belongs to the SAA family. As to expression, expressed by the liver; secreted in plasma.

The protein localises to the secreted. Its function is as follows. Major acute phase reactant. Apolipoprotein of the HDL complex. In Felis catus (Cat), this protein is Serum amyloid A protein (SAA1).